The primary structure comprises 463 residues: Lipase 6 (463 aa).

An N-terminal signal peptide occupies residues 1 to 16 (MRDLILFLSLLHTIFA). An intrachain disulfide couples Cys-112 to Cys-285. The active-site Charge relay system is the Ser-196. N-linked (GlcNAc...) asparagine glycosylation occurs at Asn-231. Catalysis depends on charge relay system residues Asp-348 and His-381. An intrachain disulfide couples Cys-364 to Cys-409. N-linked (GlcNAc...) asparagine glycosylation occurs at Asn-422.

Belongs to the AB hydrolase superfamily. Lipase family. Class Lip subfamily.

The protein localises to the secreted. The enzyme catalyses a triacylglycerol + H2O = a diacylglycerol + a fatty acid + H(+). Secreted lipase that is able to hydrolyze both the neutral triacylglycerols and the monopalmitate ester Tween 40, allowing the use of hydrolyzed products as carbon sources. Has broad lipolytic activity, which may be important for colonization and subsequent infection, therefore contributing to the persistence and virulence in human tissue. The chain is Lipase 6 from Candida albicans (strain SC5314 / ATCC MYA-2876) (Yeast).